The following is a 404-amino-acid chain: Tryptophan synthase beta chain (404 aa).

K94 carries the post-translational modification N6-(pyridoxal phosphate)lysine.

The protein belongs to the TrpB family. In terms of assembly, tetramer of two alpha and two beta chains. Requires pyridoxal 5'-phosphate as cofactor.

The catalysed reaction is (1S,2R)-1-C-(indol-3-yl)glycerol 3-phosphate + L-serine = D-glyceraldehyde 3-phosphate + L-tryptophan + H2O. Its pathway is amino-acid biosynthesis; L-tryptophan biosynthesis; L-tryptophan from chorismate: step 5/5. Its function is as follows. The beta subunit is responsible for the synthesis of L-tryptophan from indole and L-serine. The polypeptide is Tryptophan synthase beta chain (Staphylococcus saprophyticus subsp. saprophyticus (strain ATCC 15305 / DSM 20229 / NCIMB 8711 / NCTC 7292 / S-41)).